A 276-amino-acid polypeptide reads, in one-letter code: NH(3)-dependent NAD(+) synthetase (276 aa).

Position 39 to 46 (39 to 46 (GLSGGVDS)) interacts with ATP. Asp-45 provides a ligand contact to Mg(2+). Arg-123 contributes to the deamido-NAD(+) binding site. An ATP-binding site is contributed by Thr-143. Glu-148 is a Mg(2+) binding site. Deamido-NAD(+) is bound by residues Lys-156 and Asp-163. ATP-binding residues include Lys-172 and Ser-194. 254–255 (HK) serves as a coordination point for deamido-NAD(+).

It belongs to the NAD synthetase family. As to quaternary structure, homodimer.

It carries out the reaction deamido-NAD(+) + NH4(+) + ATP = AMP + diphosphate + NAD(+) + H(+). It participates in cofactor biosynthesis; NAD(+) biosynthesis; NAD(+) from deamido-NAD(+) (ammonia route): step 1/1. Catalyzes the ATP-dependent amidation of deamido-NAD to form NAD. Uses ammonia as a nitrogen source. In Hyperthermus butylicus (strain DSM 5456 / JCM 9403 / PLM1-5), this protein is NH(3)-dependent NAD(+) synthetase.